We begin with the raw amino-acid sequence, 1952 residues long: Protein ROS1A (1952 aa).

Disordered stretches follow at residues 72 to 157, 693 to 778, 1302 to 1334, and 1367 to 1398; these read EVVG…CRSE, IIRP…ESTS, HGTS…DDNV, and LIEN…AGKK. Basic residues-rich tracts occupy residues 90–102 and 130–139; these read PARK…HRPK and GKRKYVRKKT. Composition is skewed to basic and acidic residues over residues 709-720 and 727-747; these read PRTDNHQVKVSE and LPEK…EKPK. Positions 769-778 are enriched in polar residues; that stretch reads TNPLQNESTS. A compositionally biased stretch (basic residues) spans 1388–1398; the sequence is AKRPRVGAGKK. Cysteine 1582, cysteine 1589, cysteine 1592, and cysteine 1598 together coordinate [4Fe-4S] cluster.

It belongs to the DNA glycosylase family. DEMETER subfamily. [4Fe-4S] cluster is required as a cofactor. In terms of tissue distribution, expressed in roots, leaf blades, leaf sheaths, apical and lateral shoot meristems, inflorescence meristems, lodicules, pollen grains, ovules and seeds. Expressed in vascular tissues of roots and leaves, pollen grains, pericarp, aleurone, and starchy endosperm.

Its subcellular location is the nucleus. Its function is as follows. Bifunctional DNA glycosylase/lyase, which excises 5-methylcytosine (5-meC) and 5-hydroxymethylcytosine (5-hmeC), leaving an apyrimidinic (AP) site that is subsequently incised by the lyase activity. DNA demethylase that is indispensable in both male and female gametophyte development. Involved in the regulation of DNA methylation in the promoters of RISBZ1/BZIP58 and DOF3/RPBF, two transcription factors that functions synergistically to positively regulate genes that are key players in the development of aleurone layers. Active DNA demethylation carried out by ROS1A in rice endosperms may restrict the number of aleurone cell layers. This Oryza sativa subsp. japonica (Rice) protein is Protein ROS1A.